The primary structure comprises 91 residues: Small ribosomal subunit protein uS19 (91 aa).

The protein belongs to the universal ribosomal protein uS19 family.

Functionally, protein S19 forms a complex with S13 that binds strongly to the 16S ribosomal RNA. This is Small ribosomal subunit protein uS19 from Cupriavidus taiwanensis (strain DSM 17343 / BCRC 17206 / CCUG 44338 / CIP 107171 / LMG 19424 / R1) (Ralstonia taiwanensis (strain LMG 19424)).